The primary structure comprises 862 residues: Valine--tRNA ligase (862 aa).

Positions 44–53 (NVTGSLHMGH) match the 'HIGH' region motif. Zn(2+) is bound by residues cysteine 176, cysteine 179, cysteine 344, cysteine 347, cysteine 417, cysteine 420, cysteine 438, and cysteine 441. The 'KMSKS' region signature appears at 528–532 (KMSKS). Residue lysine 531 participates in ATP binding. Residues 802–862 (RRRQEKRLKE…RIREALSQIG (61 aa)) are a coiled coil.

The protein belongs to the class-I aminoacyl-tRNA synthetase family. ValS type 1 subfamily. As to quaternary structure, monomer. The cofactor is Zn(2+).

The protein localises to the cytoplasm. It catalyses the reaction tRNA(Val) + L-valine + ATP = L-valyl-tRNA(Val) + AMP + diphosphate. Its function is as follows. Catalyzes the attachment of valine to tRNA(Val). As ValRS can inadvertently accommodate and process structurally similar amino acids such as threonine, to avoid such errors, it has a 'posttransfer' editing activity that hydrolyzes mischarged Thr-tRNA(Val) in a tRNA-dependent manner. The protein is Valine--tRNA ligase of Thermus thermophilus (strain ATCC 27634 / DSM 579 / HB8).